The chain runs to 612 residues: UvrABC system protein C (612 aa).

In terms of domain architecture, GIY-YIG spans 20–98 (THSGVYRMLD…IKQHRPKYNI (79 aa)). The UVR domain occupies 208-243 (SSVLEEISAKMYQASEDMEYEKAQVYRDQLVVLRKL).

It belongs to the UvrC family. In terms of assembly, interacts with UvrB in an incision complex.

The protein resides in the cytoplasm. Its function is as follows. The UvrABC repair system catalyzes the recognition and processing of DNA lesions. UvrC both incises the 5' and 3' sides of the lesion. The N-terminal half is responsible for the 3' incision and the C-terminal half is responsible for the 5' incision. The polypeptide is UvrABC system protein C (Francisella tularensis subsp. tularensis (strain WY96-3418)).